The following is a 190-amino-acid chain: MQLVFASNNKNKILEIQSMLPESIKILSLSDIGCHEDIPETANTIEGNAILKANYVTQKYGYDCFADDTGLEVEVLNGQPGVFSARYAGEQRNDNDNMDKLLTELDDKTNRNAQFKTVICLNINNKQHLFTGIAKGNIVKNKIGNQGFGYDPIFQPEGYQYTFAQISLEEKANISHRGKATRALIDFFKN.

7–12 (SNNKNK) is a substrate binding site. Asp-68 serves as the catalytic Proton acceptor. Asp-68 is a binding site for Mg(2+). Substrate-binding positions include Thr-69, 148 to 151 (FGYD), Lys-171, and 176 to 177 (HR).

It belongs to the HAM1 NTPase family. As to quaternary structure, homodimer. It depends on Mg(2+) as a cofactor.

The catalysed reaction is XTP + H2O = XMP + diphosphate + H(+). It catalyses the reaction dITP + H2O = dIMP + diphosphate + H(+). The enzyme catalyses ITP + H2O = IMP + diphosphate + H(+). Pyrophosphatase that catalyzes the hydrolysis of nucleoside triphosphates to their monophosphate derivatives, with a high preference for the non-canonical purine nucleotides XTP (xanthosine triphosphate), dITP (deoxyinosine triphosphate) and ITP. Seems to function as a house-cleaning enzyme that removes non-canonical purine nucleotides from the nucleotide pool, thus preventing their incorporation into DNA/RNA and avoiding chromosomal lesions. The polypeptide is dITP/XTP pyrophosphatase (Flavobacterium psychrophilum (strain ATCC 49511 / DSM 21280 / CIP 103535 / JIP02/86)).